Reading from the N-terminus, the 541-residue chain is Man(5)GlcNAc(2)-PP-dolichol translocation protein RFT1 (541 aa).

The next 11 helical transmembrane spans lie at 16 to 36, 45 to 62, 85 to 105, 123 to 143, 154 to 176, 187 to 207, 335 to 355, 376 to 396, 414 to 434, 470 to 490, and 499 to 519; these read SGLL…AFIL, GIVN…TFLA, LLWL…WVWL, VLFF…WVLA, LAES…WLPH, LLYT…LLRS, LALL…QLAL, CLYV…FAAM, SFLV…FIMA, VLLG…AFLC, and LAHI…AFLT.

This sequence belongs to the RFT1 family.

The protein resides in the endoplasmic reticulum membrane. It functions in the pathway protein modification; protein glycosylation. Functionally, intramembrane glycolipid transporter that operates in the biosynthetic pathway of dolichol-linked oligosaccharides, the glycan precursors employed in protein asparagine (N)-glycosylation. The sequential addition of sugars to dolichol pyrophosphate produces dolichol-linked oligosaccharides containing fourteen sugars, including two GlcNAcs, nine mannoses and three glucoses. Once assembled, the oligosaccharide is transferred from the lipid to nascent proteins by oligosaccharyltransferases. The assembly of dolichol-linked oligosaccharides begins on the cytosolic side of the endoplasmic reticulum membrane and finishes in its lumen. RFT1 could mediate the translocation of the cytosolically oriented intermediate DolPP-GlcNAc2Man5, produced by ALG11, into the ER lumen where dolichol-linked oligosaccharides assembly continues. However, the intramembrane lipid transporter activity could not be confirmed in vitro. The chain is Man(5)GlcNAc(2)-PP-dolichol translocation protein RFT1 from Mus musculus (Mouse).